Consider the following 465-residue polypeptide: Cysteine--tRNA ligase (465 aa).

A Zn(2+)-binding site is contributed by Cys27. Positions 29–39 (PTVYDDAHLGH) match the 'HIGH' region motif. Positions 207, 237, and 241 each coordinate Zn(2+). Positions 269–273 (KMSKS) match the 'KMSKS' region motif. Position 272 (Lys272) interacts with ATP.

It belongs to the class-I aminoacyl-tRNA synthetase family. As to quaternary structure, monomer. The cofactor is Zn(2+).

It localises to the cytoplasm. The catalysed reaction is tRNA(Cys) + L-cysteine + ATP = L-cysteinyl-tRNA(Cys) + AMP + diphosphate. The protein is Cysteine--tRNA ligase of Nitratiruptor sp. (strain SB155-2).